Reading from the N-terminus, the 200-residue chain is 3-isopropylmalate dehydratase small subunit (200 aa).

This sequence belongs to the LeuD family. LeuD type 1 subfamily. Heterodimer of LeuC and LeuD.

The catalysed reaction is (2R,3S)-3-isopropylmalate = (2S)-2-isopropylmalate. Its pathway is amino-acid biosynthesis; L-leucine biosynthesis; L-leucine from 3-methyl-2-oxobutanoate: step 2/4. Its function is as follows. Catalyzes the isomerization between 2-isopropylmalate and 3-isopropylmalate, via the formation of 2-isopropylmaleate. The chain is 3-isopropylmalate dehydratase small subunit from Yersinia pseudotuberculosis serotype O:1b (strain IP 31758).